Reading from the N-terminus, the 149-residue chain is Endoribonuclease YbeY (149 aa).

Zn(2+) is bound by residues H101, H105, and H111.

This sequence belongs to the endoribonuclease YbeY family. It depends on Zn(2+) as a cofactor.

It localises to the cytoplasm. In terms of biological role, single strand-specific metallo-endoribonuclease involved in late-stage 70S ribosome quality control and in maturation of the 3' terminus of the 16S rRNA. This Thermotoga neapolitana (strain ATCC 49049 / DSM 4359 / NBRC 107923 / NS-E) protein is Endoribonuclease YbeY.